The following is a 524-amino-acid chain: Pentatricopeptide repeat-containing protein At1g02150 (524 aa).

7 PPR repeats span residues 168 to 202, 203 to 237, 238 to 268, 274 to 304, 309 to 339, 344 to 378, and 379 to 413; these read DRRV…GYAL, HPLP…DIRL, DIYS…MKSD, NWTT…VEAR, NRIP…YKSV, PNLG…KSSY, and DPRI…GGKP.

It belongs to the PPR family. P subfamily.

The polypeptide is Pentatricopeptide repeat-containing protein At1g02150 (Arabidopsis thaliana (Mouse-ear cress)).